Consider the following 253-residue polypeptide: 5-oxoprolinase subunit A (253 aa).

This sequence belongs to the LamB/PxpA family. In terms of assembly, forms a complex composed of PxpA, PxpB and PxpC.

The enzyme catalyses 5-oxo-L-proline + ATP + 2 H2O = L-glutamate + ADP + phosphate + H(+). Functionally, catalyzes the cleavage of 5-oxoproline to form L-glutamate coupled to the hydrolysis of ATP to ADP and inorganic phosphate. This is 5-oxoprolinase subunit A from Bacillus cereus (strain ATCC 14579 / DSM 31 / CCUG 7414 / JCM 2152 / NBRC 15305 / NCIMB 9373 / NCTC 2599 / NRRL B-3711).